Consider the following 555-residue polypeptide: Potassium-transporting ATPase potassium-binding subunit (555 aa).

A run of 10 helical transmembrane segments spans residues 2-22, 60-80, 130-150, 173-193, 246-266, 278-298, 374-394, 412-432, 483-503, and 525-545; these read IWVAVVITMLLFILVAKPTGI, QYALSLVLLNGFMIVVVYFIF, IGITFLMFAAPATTLALVMAF, VFLPITFMAALVFVALGVPQT, MSNILQMMLMMLLPTALPFTY, ILFVSLFMVFLLGFITITTSE, AGFVNIIMYAIIAVFISGLMV, LIAVTILFHPLLILGFSALAL, LVMFLGRYFSLITMLAVAASL, and GIFIGTIVIVGALTFFPMLVL.

Belongs to the KdpA family. In terms of assembly, the system is composed of three essential subunits: KdpA, KdpB and KdpC.

Its subcellular location is the cell membrane. In terms of biological role, part of the high-affinity ATP-driven potassium transport (or Kdp) system, which catalyzes the hydrolysis of ATP coupled with the electrogenic transport of potassium into the cytoplasm. This subunit binds the extracellular potassium ions and delivers the ions to the membrane domain of KdpB through an intramembrane tunnel. This is Potassium-transporting ATPase potassium-binding subunit from Bacillus cereus (strain AH187).